We begin with the raw amino-acid sequence, 282 residues long: Formamidopyrimidine-DNA glycosylase (282 aa).

The active-site Schiff-base intermediate with DNA is Pro-2. Glu-3 (proton donor) is an active-site residue. Lys-61 acts as the Proton donor; for beta-elimination activity in catalysis. Residues His-93, Arg-112, and Lys-158 each coordinate DNA. An FPG-type zinc finger spans residues 244 to 278 (DAYGREGEPCRRCGAIMRRDKFMNRSSFYCPRCQP). The Proton donor; for delta-elimination activity role is filled by Arg-268.

Belongs to the FPG family. Monomer. The cofactor is Zn(2+).

It carries out the reaction Hydrolysis of DNA containing ring-opened 7-methylguanine residues, releasing 2,6-diamino-4-hydroxy-5-(N-methyl)formamidopyrimidine.. It catalyses the reaction 2'-deoxyribonucleotide-(2'-deoxyribose 5'-phosphate)-2'-deoxyribonucleotide-DNA = a 3'-end 2'-deoxyribonucleotide-(2,3-dehydro-2,3-deoxyribose 5'-phosphate)-DNA + a 5'-end 5'-phospho-2'-deoxyribonucleoside-DNA + H(+). In terms of biological role, involved in base excision repair of DNA damaged by oxidation or by mutagenic agents. Acts as a DNA glycosylase that recognizes and removes damaged bases. Has a preference for oxidized purines, such as 7,8-dihydro-8-oxoguanine (8-oxoG). Has AP (apurinic/apyrimidinic) lyase activity and introduces nicks in the DNA strand. Cleaves the DNA backbone by beta-delta elimination to generate a single-strand break at the site of the removed base with both 3'- and 5'-phosphates. The protein is Formamidopyrimidine-DNA glycosylase of Mycolicibacterium gilvum (strain PYR-GCK) (Mycobacterium gilvum (strain PYR-GCK)).